Reading from the N-terminus, the 291-residue chain is N-acetylmannosamine kinase (291 aa).

ATP is bound by residues 5-12 (AIDIGGTK) and 132-139 (GVGGGVVS). Positions 156, 166, 168, and 173 each coordinate Zn(2+).

This sequence belongs to the ROK (NagC/XylR) family. NanK subfamily. Homodimer.

The enzyme catalyses an N-acyl-D-mannosamine + ATP = an N-acyl-D-mannosamine 6-phosphate + ADP + H(+). It participates in amino-sugar metabolism; N-acetylneuraminate degradation; D-fructose 6-phosphate from N-acetylneuraminate: step 2/5. Its function is as follows. Catalyzes the phosphorylation of N-acetylmannosamine (ManNAc) to ManNAc-6-P. The protein is N-acetylmannosamine kinase of Shigella flexneri serotype 5b (strain 8401).